A 332-amino-acid chain; its full sequence is MATEIFYDADADLGIIQGRKVAVIGYGSQGHAHALSLRDSGADVRIGLPEGSKSRAKAEEEGLRVLTPAEASAEADLIMILAPDTKQRQIYADDIAPNLKSGDALFFGHGFNIRYGLIKPPSDVDVAMVAPKGPGHLVRRQFVDGKGVPCLIAVEQDASGNAQALALSYAAGIGGARAGVIKTTFTEETETDLFGEQAVLCGGASALVQTGFEVLVEAGYQPEIAYFEVLHELKLIVDLMWEGGIAGQRYSISDTAEYGDLTRGPRVIDAHVKESMRKILAEVQDGTFAKEWVAEDEAGRPNFNKLQDQGNAHQIEEVGKKLRSLMSWTQRP.

The KARI N-terminal Rossmann domain maps to 3–183 (TEIFYDADAD…GGARAGVIKT (181 aa)). NADP(+) is bound by residues 26-29 (YGSQ), Ser52, Ser54, and 84-87 (DTKQ). His109 is a catalytic residue. Gly135 lines the NADP(+) pocket. Positions 184–329 (TFTEETETDL…KKLRSLMSWT (146 aa)) constitute a KARI C-terminal knotted domain. 4 residues coordinate Mg(2+): Asp192, Glu196, Glu228, and Glu232. Position 253 (Ser253) interacts with substrate.

This sequence belongs to the ketol-acid reductoisomerase family. The cofactor is Mg(2+).

The catalysed reaction is (2R)-2,3-dihydroxy-3-methylbutanoate + NADP(+) = (2S)-2-acetolactate + NADPH + H(+). The enzyme catalyses (2R,3R)-2,3-dihydroxy-3-methylpentanoate + NADP(+) = (S)-2-ethyl-2-hydroxy-3-oxobutanoate + NADPH + H(+). It participates in amino-acid biosynthesis; L-isoleucine biosynthesis; L-isoleucine from 2-oxobutanoate: step 2/4. It functions in the pathway amino-acid biosynthesis; L-valine biosynthesis; L-valine from pyruvate: step 2/4. Involved in the biosynthesis of branched-chain amino acids (BCAA). Catalyzes an alkyl-migration followed by a ketol-acid reduction of (S)-2-acetolactate (S2AL) to yield (R)-2,3-dihydroxy-isovalerate. In the isomerase reaction, S2AL is rearranged via a Mg-dependent methyl migration to produce 3-hydroxy-3-methyl-2-ketobutyrate (HMKB). In the reductase reaction, this 2-ketoacid undergoes a metal-dependent reduction by NADPH to yield (R)-2,3-dihydroxy-isovalerate. This chain is Ketol-acid reductoisomerase (NADP(+)), found in Saccharopolyspora erythraea (strain ATCC 11635 / DSM 40517 / JCM 4748 / NBRC 13426 / NCIMB 8594 / NRRL 2338).